We begin with the raw amino-acid sequence, 1770 residues long: NEDD4-binding protein 2 (1770 aa).

Positions 1 to 40 (MPRRRKNLGGNPFRKTANPKEVVVSSVASREEPTTTLPSM) are disordered. The 44-residue stretch at 46–89 (DQEELFTSISEIFSDLDPDVVYLMLSECDFKVENAMDCLLELSA) folds into the CUE domain. Coiled coils occupy residues 90 to 177 (TDTK…NDSS) and 218 to 259 (HSVL…IAGC). Positions 95–129 (EESSSQSFVASENQVGAAESKIMEKRPEEESEDSK) are disordered. Polar residues predominate over residues 97–108 (SSSQSFVASENQ). A compositionally biased stretch (basic and acidic residues) spans 115–129 (KIMEKRPEEESEDSK). An ATP-binding site is contributed by 447–454 (GLPGSGKS). Disordered regions lie at residues 712–756 (SKTD…GEIV), 795–822 (KTIG…YNYP), 836–862 (DCVQ…ASEP), and 890–913 (SLAQ…LEIG). A compositionally biased stretch (basic and acidic residues) spans 843 to 856 (SPHESVEDGRKSQC). S906 is subject to Phosphoserine. Residue T1210 is modified to Phosphothreonine. A disordered region spans residues 1580 to 1606 (NENVTSHTGQKSKEKKPKKLKETEETP). A Smr domain is found at 1691–1770 (LDLHGLHVDE…KPGCLKVMLK (80 aa)).

In terms of assembly, binds NEDD4. Binds BCL3 and CREBBP. In terms of processing, ubiquitinated; this targets the protein for degradation by the proteasome.

Its subcellular location is the cytoplasm. Has 5'-polynucleotide kinase and nicking endonuclease activity. May play a role in DNA repair or recombination. This is NEDD4-binding protein 2 (N4BP2) from Homo sapiens (Human).